A 336-amino-acid polypeptide reads, in one-letter code: MSIVPAVVELEKIRDFFYRLAEARDRLREAGFRHPAEVPLAVGTPLVKLGFIAMLRRGVIMDVTNVEQAQVAEEAGAVGVMVLDKLPYDVRKAGGVARMADLKIIEEVMDAITIPVSAKVRIGHFYEAVLLEQIGVDLIDESEVLTPVDEQHHINKWLFKTPFVNGARELCEALRRISEGASMIRSKGEAGTGNVAEAVKHFKAIYGAVRDLTAHRDDEEYLRDYARRCQVPLEVVKLTADMGRVPVITFAAGGIATPADAAFMMWLGADGVFVGSGIFKSQDPERRAEAIVLATAYWDDPEAVAEAQKMVSEKASMMGIDIRALKPEELLQTRGV.

A D-ribose 5-phosphate-binding site is contributed by D62. K119 serves as the catalytic Schiff-base intermediate with D-ribose 5-phosphate. D-ribose 5-phosphate is bound at residue G191. Residue K203 coordinates D-glyceraldehyde 3-phosphate. D-ribose 5-phosphate-binding positions include G254 and 275-276 (GS).

It belongs to the PdxS/SNZ family. In the presence of PdxT, forms a dodecamer of heterodimers.

It carries out the reaction aldehydo-D-ribose 5-phosphate + D-glyceraldehyde 3-phosphate + L-glutamine = pyridoxal 5'-phosphate + L-glutamate + phosphate + 3 H2O + H(+). It functions in the pathway cofactor biosynthesis; pyridoxal 5'-phosphate biosynthesis. Catalyzes the formation of pyridoxal 5'-phosphate from ribose 5-phosphate (RBP), glyceraldehyde 3-phosphate (G3P) and ammonia. The ammonia is provided by the PdxT subunit. Can also use ribulose 5-phosphate and dihydroxyacetone phosphate as substrates, resulting from enzyme-catalyzed isomerization of RBP and G3P, respectively. This Pyrobaculum calidifontis (strain DSM 21063 / JCM 11548 / VA1) protein is Pyridoxal 5'-phosphate synthase subunit PdxS.